The sequence spans 186 residues: Adenylate kinase isoenzyme 6 homolog (186 aa).

ATP contacts are provided by G15, G17, K18, S19, and T20. Positions 48–71 (NLSNIIKDERLYKEFDDELDASIY) are NMPbind. The interval 126 to 136 (KRNYTKEKIKN) is LID. R127 contributes to the ATP binding site.

The protein belongs to the adenylate kinase family. AK6 subfamily. As to quaternary structure, monomer and homodimer. Interacts with small ribosomal subunit protein uS11. Not a structural component of 43S pre-ribosomes, but transiently interacts with them by binding to uS11.

The protein resides in the cytoplasm. It is found in the nucleus. The enzyme catalyses AMP + ATP = 2 ADP. It catalyses the reaction ATP + H2O = ADP + phosphate + H(+). In terms of biological role, broad-specificity nucleoside monophosphate (NMP) kinase that catalyzes the reversible transfer of the terminal phosphate group between nucleoside triphosphates and monophosphates. Also has ATPase activity. Involved in the late cytoplasmic maturation steps of the 40S ribosomal particles, specifically 18S rRNA maturation. While NMP activity is not required for ribosome maturation, ATPase activity is. Associates transiently with small ribosomal subunit protein uS11. ATP hydrolysis breaks the interaction with uS11. May temporarily remove uS11 from the ribosome to enable a conformational change of the ribosomal RNA that is needed for the final maturation step of the small ribosomal subunit. Its NMP activity may have a role in nuclear energy homeostasis. The polypeptide is Adenylate kinase isoenzyme 6 homolog (Plasmodium falciparum (isolate 3D7)).